Here is a 91-residue protein sequence, read N- to C-terminus: Small ribosomal subunit protein uS19 (91 aa).

Belongs to the universal ribosomal protein uS19 family.

Functionally, protein S19 forms a complex with S13 that binds strongly to the 16S ribosomal RNA. The polypeptide is Small ribosomal subunit protein uS19 (Metamycoplasma arthritidis (strain 158L3-1) (Mycoplasma arthritidis)).